A 168-amino-acid polypeptide reads, in one-letter code: 3-isopropylmalate dehydratase small subunit 2 (168 aa).

The protein belongs to the LeuD family. LeuD type 2 subfamily. As to quaternary structure, heterodimer of LeuC and LeuD.

The enzyme catalyses (2R,3S)-3-isopropylmalate = (2S)-2-isopropylmalate. The protein operates within amino-acid biosynthesis; L-leucine biosynthesis; L-leucine from 3-methyl-2-oxobutanoate: step 2/4. In terms of biological role, catalyzes the isomerization between 2-isopropylmalate and 3-isopropylmalate, via the formation of 2-isopropylmaleate. The sequence is that of 3-isopropylmalate dehydratase small subunit 2 (leuD2) from Methanopyrus kandleri (strain AV19 / DSM 6324 / JCM 9639 / NBRC 100938).